Reading from the N-terminus, the 498-residue chain is Minor fimbrium subunit Mfa1 (498 aa).

The N-terminal stretch at 1–19 (MKLNKMFLVGALLSLGFAS) is a signal peptide. The N-palmitoyl cysteine moiety is linked to residue cysteine 20. Cysteine 20 carries S-diacylglycerol cysteine lipidation. The propeptide occupies 20–50 (CSKEGNGPAPDSSSTADTHMSVSMSLPQHNR). The interval 436–476 (SGNPFVPTDPDPNNPDTPDNPDTPDPEDPDTPNPEEPLPVQ) is disordered.

The protein belongs to the bacteroidetes fimbrillin superfamily. FimA/Mfa1 family. In terms of assembly, structural component of the fimbrial stalk. Minor fimbriae are composed of a structural subunit, most often Mfa1, and the accessory subunits Mfa3, Mfa4 and Mfa5. Mfa1 interacts with Mfa2; this anchors the fimbrium in the membrane. Fimbrium assembly occurs by linear, head-to-tail oligomerization of fimbrial subunits. This is mediated via insertion of a C-terminal beta-strand from one subunit into a groove in the N-terminal domain of the following subunit.

The protein localises to the fimbrium. It localises to the cell outer membrane. In terms of biological role, structural subunit of the minor fimbriae. These filamentous pili are attached to the cell surface; they mediate biofilm formation, adhesion onto host cells and onto other bacteria that are part of the oral microbiome. They play an important role in invasion of periodontal tissues and are recognized as major virulence factors. Mfa1 orthologs from different strains have highly divergent sequences, and this correlates with pathogenicity. This is Minor fimbrium subunit Mfa1 from Porphyromonas gingivalis (Bacteroides gingivalis).